The primary structure comprises 262 residues: Small ribosomal subunit protein eS1z (262 aa).

Basic residues predominate over residues 1–18; it reads MAVGKNKRISKGRKGGKK. A disordered region spans residues 1-21; the sequence is MAVGKNKRISKGRKGGKKKAV.

The protein belongs to the eukaryotic ribosomal protein eS1 family. Component of the small ribosomal subunit. Mature ribosomes consist of a small (40S) and a large (60S) subunit. The 40S subunit contains about 33 different proteins and 1 molecule of RNA (18S). The 60S subunit contains about 49 different proteins and 3 molecules of RNA (25S, 5.8S and 5S).

It is found in the cytoplasm. The polypeptide is Small ribosomal subunit protein eS1z (Arabidopsis thaliana (Mouse-ear cress)).